Reading from the N-terminus, the 234-residue chain is MRSGEPACTMDQARGLDDAAARGGQCPGLGPAPTPTPPGRLGAPYSEAWGYFHLAPGRPGHPSGHWATCRLCGEQVGRGPGFHAGTSALWRHLRSAHRRELESSGAGSSPPAAPCPPPPGPAAAPEGDWARLLEQMGALAVRGSRRERELERRELAVEQGERALERRRRALQEEERAAAQARRELQAEREALQARLRDVSRREGALGWAPAAPPPLKDDPEGDRDGCVITKVLL.

Residues 19 to 42 (AAARGGQCPGLGPAPTPTPPGRLG) are disordered. A BED-type zinc finger spans residues 43–104 (APYSEAWGYF…SAHRRELESS (62 aa)). Positions 69, 72, 92, and 97 each coordinate Zn(2+). 2 disordered regions span residues 94–126 (RSAH…AAPE) and 202–225 (REGA…GDRD). Pro residues predominate over residues 111-122 (PAAPCPPPPGPA). Residues 216–225 (LKDDPEGDRD) show a composition bias toward basic and acidic residues.

In terms of assembly, associates with the subcortical maternal complex (SCMC) composed of at least NLRP5, KHDC3L, OOEP, and TLE6 via interaction with NLRP5 and TLE6. Interacts with AXIN1; the interaction is direct, enhanced by protein kinase GSK3B and casein kinase CSNK1E activities and decreases GSK3B-induced beta-catenin serine and threonine phosphorylations. As to expression, secreted in blood plasma, and expressed in skeletal muscle and adipose tissue (at protein level).

The protein resides in the cytoplasm. It is found in the membrane. Its subcellular location is the secreted. Its function is as follows. Acts as a positive regulator in the activation of the canonical Wnt/beta-catenin signaling pathway by stabilizing cytoplasmic beta-catenin. Involved in transcription activation of Wnt target gene expression. Plays a role in symmetric division of blastomeres in the early stages of embryogenesis via regulation of mitotic spindle central positioning and organization of the F-actin filament network. Plays a role in regulating the distribution of cellular organelles, via modulation of cytoskeletal dynamics and cytoplasmic lattice formation. In Homo sapiens (Human), this protein is Zinc finger BED domain-containing protein 3 (ZBED3).